Reading from the N-terminus, the 350-residue chain is GTPase Obg (350 aa).

The Obg domain maps to 1–158; that stretch reads MFIDSVKITL…RLVRLELKLI (158 aa). The OBG-type G domain occupies 159 to 339; that stretch reads ADVGLVGFPN…LKFMLLEEIK (181 aa). GTP contacts are provided by residues 165 to 172, 190 to 194, 212 to 215, 280 to 283, and 320 to 322; these read GFPNVGKS, FTTLT, DIPG, SKSD, and SSL. Positions 172 and 192 each coordinate Mg(2+).

Belongs to the TRAFAC class OBG-HflX-like GTPase superfamily. OBG GTPase family. In terms of assembly, monomer. It depends on Mg(2+) as a cofactor.

The protein localises to the cytoplasm. Its function is as follows. An essential GTPase which binds GTP, GDP and possibly (p)ppGpp with moderate affinity, with high nucleotide exchange rates and a fairly low GTP hydrolysis rate. Plays a role in control of the cell cycle, stress response, ribosome biogenesis and in those bacteria that undergo differentiation, in morphogenesis control. This chain is GTPase Obg, found in Campylobacter jejuni subsp. jejuni serotype O:2 (strain ATCC 700819 / NCTC 11168).